We begin with the raw amino-acid sequence, 65 residues long: MWKLWKFVDFRMTAVGFHIFFALIAFAVHFACISSERFNWLEGAPAAEYYMDENPGIWKRTSYDG.

At 1 to 13 the chain is on the cytoplasmic side; sequence MWKLWKFVDFRMT. Residues 14 to 34 traverse the membrane as a helical segment; sequence AVGFHIFFALIAFAVHFACIS. His-29 contributes to the a bacteriochlorophyll binding site. The Periplasmic segment spans residues 35-65; it reads SERFNWLEGAPAAEYYMDENPGIWKRTSYDG.

Belongs to the antenna complex alpha subunit family. The core complex is formed by different alpha and beta chains, binding bacteriochlorophyll molecules, and arranged most probably in tetrameric structures disposed around the reaction center. The non-pigmented gamma chains may constitute additional components.

The protein localises to the cell inner membrane. In terms of biological role, antenna complexes are light-harvesting systems, which transfer the excitation energy to the reaction centers. The chain is Light-harvesting protein B800/830/1020 alpha-2 chain from Halorhodospira halochloris (Ectothiorhodospira halochloris).